We begin with the raw amino-acid sequence, 902 residues long: Phosphoenolpyruvate carboxylase (902 aa).

Histidine 132 is a catalytic residue. Positions aspartate 327–tyrosine 346 are disordered. Lysine 561 is a catalytic residue.

It belongs to the PEPCase type 1 family. The cofactor is Mg(2+).

The enzyme catalyses oxaloacetate + phosphate = phosphoenolpyruvate + hydrogencarbonate. Functionally, forms oxaloacetate, a four-carbon dicarboxylic acid source for the tricarboxylic acid cycle. The protein is Phosphoenolpyruvate carboxylase of Corynebacterium diphtheriae (strain ATCC 700971 / NCTC 13129 / Biotype gravis).